Consider the following 101-residue polypeptide: Small ribosomal subunit protein uS14 (101 aa).

Belongs to the universal ribosomal protein uS14 family. Part of the 30S ribosomal subunit. Contacts proteins S3 and S10.

Functionally, binds 16S rRNA, required for the assembly of 30S particles and may also be responsible for determining the conformation of the 16S rRNA at the A site. This is Small ribosomal subunit protein uS14 from Dechloromonas aromatica (strain RCB).